A 367-amino-acid polypeptide reads, in one-letter code: Phosphoribosylaminoimidazole-succinocarboxamide synthase (367 aa).

Belongs to the SAICAR synthetase family.

It carries out the reaction 5-amino-1-(5-phospho-D-ribosyl)imidazole-4-carboxylate + L-aspartate + ATP = (2S)-2-[5-amino-1-(5-phospho-beta-D-ribosyl)imidazole-4-carboxamido]succinate + ADP + phosphate + 2 H(+). It functions in the pathway purine metabolism; IMP biosynthesis via de novo pathway; 5-amino-1-(5-phospho-D-ribosyl)imidazole-4-carboxamide from 5-amino-1-(5-phospho-D-ribosyl)imidazole-4-carboxylate: step 1/2. The sequence is that of Phosphoribosylaminoimidazole-succinocarboxamide synthase from Shewanella sp. (strain ANA-3).